We begin with the raw amino-acid sequence, 589 residues long: ATP-dependent lipid A-core flippase (589 aa).

The next 5 membrane-spanning stretches (helical) occupy residues 23-43, 60-80, 153-173, 249-269, and 272-292; these read WPIFLIGVVGMIAVSLSDAGF, LVFIRWLPFIIVLVFLFRGAA, VGLLVVMFLVSWKLTLFFLVI, VGTSLVQLLIAIPIAIVLFFA, and PSFHVTAGSFASIVSAMIMML. Residues 27 to 307 form the ABC transmembrane type-1 domain; sequence LIGVVGMIAV…LTMVNSYIQK (281 aa). The region spanning 339–575 is the ABC transporter domain; that stretch reads IEYQGVSFAY…NGAYAELYRM (237 aa). 373–380 contacts ATP; that stretch reads GRSGAGKS.

It belongs to the ABC transporter superfamily. Lipid exporter (TC 3.A.1.106) family. Homodimer.

Its subcellular location is the cell inner membrane. It carries out the reaction ATP + H2O + lipid A-core oligosaccharideSide 1 = ADP + phosphate + lipid A-core oligosaccharideSide 2.. Functionally, involved in lipopolysaccharide (LPS) biosynthesis. Translocates lipid A-core from the inner to the outer leaflet of the inner membrane. Transmembrane domains (TMD) form a pore in the inner membrane and the ATP-binding domain (NBD) is responsible for energy generation. The chain is ATP-dependent lipid A-core flippase from Coxiella burnetii (strain RSA 493 / Nine Mile phase I).